A 314-amino-acid chain; its full sequence is Mitochondrial MRF1 N(5)-glutamine methyltransferase MTQ1 (314 aa).

S-adenosyl-L-methionine is bound by residues 118 to 122 (FTGTG), D141, and N188. 188–191 (NPPY) provides a ligand contact to substrate.

It belongs to the protein N5-glutamine methyltransferase family.

The protein resides in the mitochondrion. It carries out the reaction L-glutaminyl-[peptide chain release factor] + S-adenosyl-L-methionine = N(5)-methyl-L-glutaminyl-[peptide chain release factor] + S-adenosyl-L-homocysteine + H(+). Methylates MRF1 on 'Gln-287' using S-adenosyl L-methionine as methyl donor. This Saccharomyces cerevisiae (strain ATCC 204508 / S288c) (Baker's yeast) protein is Mitochondrial MRF1 N(5)-glutamine methyltransferase MTQ1 (MTQ1).